A 173-amino-acid chain; its full sequence is uncharacterized protein (173 aa).

Positions 2–171 (VTVREAKLED…PDLSALKTLL (170 aa)) constitute an N-acetyltransferase domain.

Belongs to the acetyltransferase family.

This is an uncharacterized protein from Bacillus subtilis (strain 168).